The following is a 326-amino-acid chain: 4-hydroxythreonine-4-phosphate dehydrogenase (326 aa).

Substrate contacts are provided by H130 and T131. H160, H205, and H260 together coordinate a divalent metal cation. Substrate contacts are provided by K268, N277, and R286.

This sequence belongs to the PdxA family. Homodimer. Zn(2+) serves as cofactor. Requires Mg(2+) as cofactor. The cofactor is Co(2+).

It is found in the cytoplasm. It carries out the reaction 4-(phosphooxy)-L-threonine + NAD(+) = 3-amino-2-oxopropyl phosphate + CO2 + NADH. Its pathway is cofactor biosynthesis; pyridoxine 5'-phosphate biosynthesis; pyridoxine 5'-phosphate from D-erythrose 4-phosphate: step 4/5. In terms of biological role, catalyzes the NAD(P)-dependent oxidation of 4-(phosphooxy)-L-threonine (HTP) into 2-amino-3-oxo-4-(phosphooxy)butyric acid which spontaneously decarboxylates to form 3-amino-2-oxopropyl phosphate (AHAP). This is 4-hydroxythreonine-4-phosphate dehydrogenase from Aromatoleum aromaticum (strain DSM 19018 / LMG 30748 / EbN1) (Azoarcus sp. (strain EbN1)).